A 670-amino-acid polypeptide reads, in one-letter code: Polar flagellar hook-associated protein 2 (670 aa).

The segment at 226 to 300 is disordered; it reads PLQAPQQPDQ…RSSLRPEERI (75 aa). Acidic residues predominate over residues 257 to 266; that stretch reads AQDDAQDDAS. A compositionally biased stretch (low complexity) spans 272–283; that stretch reads AAGAEAAKAGQE. The span at 284–300 shows a compositional bias: basic and acidic residues; that stretch reads AIDKANQRSSLRPEERI. The stretch at 342-428 forms a coiled coil; the sequence is GTLTDSYVTT…AQSSFEEYLG (87 aa).

Belongs to the FliD family. Homopentamer.

It localises to the secreted. Its subcellular location is the bacterial flagellum. In terms of biological role, required for the morphogenesis and for the elongation of the flagellar filament by facilitating polymerization of the flagellin monomers at the tip of growing filament. Forms a capping structure, which prevents flagellin subunits (transported through the central channel of the flagellum) from leaking out without polymerization at the distal end. Important for swimming motility. This chain is Polar flagellar hook-associated protein 2 (fliDP), found in Vibrio parahaemolyticus serotype O3:K6 (strain RIMD 2210633).